Consider the following 396-residue polypeptide: Obg-like ATPase 1 (396 aa).

Residues 23 to 283 (LKIGIVGLPN…LSAEERQKYL (261 aa)) form the OBG-type G domain. Position 32–37 (32–37 (NVGKST)) interacts with ATP. Mg(2+)-binding residues include Ser-36 and Thr-56. Leu-231 is a binding site for ATP. Positions 267-274 (LELKLQEL) match the Nuclear export signal motif. Lys-294 carries the N6-acetyllysine modification. The region spanning 304–387 (QLEYFFTAGP…EDGDIIFFKF (84 aa)) is the TGS domain.

The protein belongs to the TRAFAC class OBG-HflX-like GTPase superfamily. OBG GTPase family. YchF/OLA1 subfamily. As to quaternary structure, monomer. Mg(2+) is required as a cofactor.

The protein resides in the cytoplasm. Its subcellular location is the nucleus. It is found in the nucleolus. In terms of biological role, hydrolyzes ATP, and can also hydrolyze GTP with lower efficiency. Has lower affinity for GTP. The chain is Obg-like ATPase 1 from Pongo abelii (Sumatran orangutan).